The sequence spans 113 residues: T cell receptor alpha variable 8-4 (113 aa).

The first 20 residues, 1 to 20 (MLLLLVPVLEVIFTLGGTRA), serve as a signal peptide directing secretion. An Ig-like domain is found at 21-113 (QSVTQLGSHV…DAAEYFCAVS (93 aa)). A disulfide bridge links Cys-42 with Cys-110. Asn-43 carries N-linked (GlcNAc...) asparagine glycosylation.

As to quaternary structure, alpha-beta TR is a heterodimer composed of an alpha and beta chain; disulfide-linked. The alpha-beta TR is associated with the transmembrane signaling CD3 coreceptor proteins to form the TR-CD3 (TcR or TCR). The assembly of alpha-beta TR heterodimers with CD3 occurs in the endoplasmic reticulum where a single alpha-beta TR heterodimer associates with one CD3D-CD3E heterodimer, one CD3G-CD3E heterodimer and one CD247 homodimer forming a stable octameric structure. CD3D-CD3E and CD3G-CD3E heterodimers preferentially associate with TR alpha and TR beta chains, respectively. The association of the CD247 homodimer is the last step of TcR assembly in the endoplasmic reticulum and is required for transport to the cell surface.

The protein localises to the cell membrane. Its function is as follows. V region of the variable domain of T cell receptor (TR) alpha chain that participates in the antigen recognition. Alpha-beta T cell receptors are antigen specific receptors which are essential to the immune response and are present on the cell surface of T lymphocytes. Recognize peptide-major histocompatibility (MH) (pMH) complexes that are displayed by antigen presenting cells (APC), a prerequisite for efficient T cell adaptive immunity against pathogens. Binding of alpha-beta TR to pMH complex initiates TR-CD3 clustering on the cell surface and intracellular activation of LCK that phosphorylates the ITAM motifs of CD3G, CD3D, CD3E and CD247 enabling the recruitment of ZAP70. In turn ZAP70 phosphorylates LAT, which recruits numerous signaling molecules to form the LAT signalosome. The LAT signalosome propagates signal branching to three major signaling pathways, the calcium, the mitogen-activated protein kinase (MAPK) kinase and the nuclear factor-kappa-B (NF-kB) pathways, leading to the mobilization of transcription factors that are critical for gene expression and essential for T cell growth and differentiation. The T cell repertoire is generated in the thymus, by V-(D)-J rearrangement. This repertoire is then shaped by intrathymic selection events to generate a peripheral T cell pool of self-MH restricted, non-autoaggressive T cells. Post-thymic interaction of alpha-beta TR with the pMH complexes shapes TR structural and functional avidity. This chain is T cell receptor alpha variable 8-4, found in Homo sapiens (Human).